A 306-amino-acid chain; its full sequence is MPIKIPDDLPATSVLEAEGVMVMREADAVRQDIRPLRIGLLNLMPNKVTTETQIARLLGATPLQVELTLVRMTNHVARHTPADHMLSFYCPWEEVNDQRFDGFVITGAPVERLPFEEVTYWDEMRRVFDWTQSHVHRTLNICWAAQAAVYHFHGMKKYDLPAKASGVFRQRSLVLASPYLRGFSDDFAIPVSRWTEVRKSDIPADSGLKVLVDSTETGLCLLDDPRHRSLHMFNHVEYDTTSLADEYFRDIQVQPEAKVPVNYFPGDDAKRPPENRWRSHAHLLFGNWINEMYQSTPYDIERIGKV.

The Acyl-thioester intermediate role is filled by Cys-142. Residues Lys-163 and Ser-192 each coordinate substrate. His-235 serves as the catalytic Proton acceptor. Residue Glu-237 is part of the active site. Arg-249 is a substrate binding site.

This sequence belongs to the MetA family.

The protein resides in the cytoplasm. The catalysed reaction is L-homoserine + acetyl-CoA = O-acetyl-L-homoserine + CoA. It functions in the pathway amino-acid biosynthesis; L-methionine biosynthesis via de novo pathway; O-acetyl-L-homoserine from L-homoserine: step 1/1. In terms of biological role, transfers an acetyl group from acetyl-CoA to L-homoserine, forming acetyl-L-homoserine. The polypeptide is Homoserine O-acetyltransferase (Brucella melitensis biotype 1 (strain ATCC 23456 / CCUG 17765 / NCTC 10094 / 16M)).